The chain runs to 977 residues: MDQGLSTGAHQDTDGLRERNTRVDSTVGREALTAVGEGEIKDKDGKASKTFGRTPDGTVFTVPQTHDMVSQLLLPSEPKNFGDLVVLILLAGHIMFLWALPAGAKIPIFAVTYLFWRLAYNAGIGWLLHNQSHHKTLIRWAEKTKVFVNPATGENPHPKLYNWIKRELETKIPQDYSFDNAPIEYNTWLVFRRLVDLILMCDFTSYCLFAIACGHQPVDESILMTVLRWSAGIVLVLFNLWVKLDAHRVVKDYAWYWGDFFYLIDQELTFDGVFEMAPHPMYSVGYAGYYGISLMAASYKVLFISIIAHAAQFAFLVLVENPHIDKTYNPPPPRKRSSTCADSSSTLPTDLDTPTAPTPSEDQTPNATYSYSVKPPQPVHNLLGLHNLDLYRTTDSSIMLVQLLVFSITALTPSTPWYQLLFVVLAAISRIWYSVGIGYILRNQSNTKSWTRHFVKYGDTPQEAWNQWKGTYHLSMILCYSSFIAAVWKMYTFPADWGYGLVLFRHVLGAGLISLQIWTSVSIYESLGEFGWFYGDFFFDDSPKLTYNGIYRFLNNPERVLGLAGVWGAVLITSSGAVTFLALLSHILSLAFIQFVERPHMQKLYGRSLRQDAGLVKSLKRSLPPSLKQLHGSVDKMFDDSFEFIEEMLDNARPKLAAGVNTFVKDTTALFQKYPARVTIARIDADLAGFDVRDYALSVEGTSALSFEESEKNKGREGANARMPLDRRGDLKDLTFEYGSPIRVKWTAPLHHSKKDWIGLYRVTDNTSREVTRVSSQGRWVATNEGAYDNLTCEKGILTSDVVIPSSERQGQDPCEFASGEIVFAGDKLFWTQGVFELRYHHNGMHNVMAISRPFEIRIRRSDEDETISDGDSFVESAVENALLPVVRNCFDRDPEIAPETVDEQFGTLVERDGKFAKRVVFAVHQMFGIELAAEVVKADGNVRNLAWRICNAKKVLAPYSMSRSNGTTTPLEESKE.

The span at 1–10 (MDQGLSTGAH) shows a compositional bias: polar residues. The interval 1 to 23 (MDQGLSTGAHQDTDGLRERNTRV) is disordered. Residues 1–83 (MDQGLSTGAH…LPSEPKNFGD (83 aa)) lie on the Lumenal side of the membrane. A compositionally biased stretch (basic and acidic residues) spans 11-22 (QDTDGLRERNTR). The helical transmembrane segment at 84 to 104 (LVVLILLAGHIMFLWALPAGA) threads the bilayer. The Cytoplasmic portion of the chain corresponds to 105–107 (KIP). The chain crosses the membrane as a helical span at residues 108-128 (IFAVTYLFWRLAYNAGIGWLL). The Lumenal portion of the chain corresponds to 129-193 (HNQSHHKTLI…EYNTWLVFRR (65 aa)). Residues 194–214 (LVDLILMCDFTSYCLFAIACG) traverse the membrane as a helical segment. Topologically, residues 215–221 (HQPVDES) are cytoplasmic. Residues 222–242 (ILMTVLRWSAGIVLVLFNLWV) traverse the membrane as a helical segment. The Lumenal segment spans residues 243–275 (KLDAHRVVKDYAWYWGDFFYLIDQELTFDGVFE). A helical membrane pass occupies residues 276–296 (MAPHPMYSVGYAGYYGISLMA). Over 297 to 298 (AS) the chain is Cytoplasmic. The helical transmembrane segment at 299–319 (YKVLFISIIAHAAQFAFLVLV) threads the bilayer. Residues 320–397 (ENPHIDKTYN…LDLYRTTDSS (78 aa)) are Lumenal-facing. The segment at 328-370 (YNPPPPRKRSSTCADSSSTLPTDLDTPTAPTPSEDQTPNATYS) is disordered. The segment covering 341–360 (ADSSSTLPTDLDTPTAPTPS) has biased composition (low complexity). Residues 361-370 (EDQTPNATYS) show a composition bias toward polar residues. The helical transmembrane segment at 398-418 (IMLVQLLVFSITALTPSTPWY) threads the bilayer. Position 419 (Gln-419) is a topological domain, cytoplasmic. The helical transmembrane segment at 420–440 (LLFVVLAAISRIWYSVGIGYI) threads the bilayer. At 441–469 (LRNQSNTKSWTRHFVKYGDTPQEAWNQWK) the chain is on the lumenal side. Residues 470–492 (GTYHLSMILCYSSFIAAVWKMYT) traverse the membrane as a helical segment. The Cytoplasmic segment spans residues 493 to 506 (FPADWGYGLVLFRH). Residues 507–527 (VLGAGLISLQIWTSVSIYESL) form a helical membrane-spanning segment. The Lumenal segment spans residues 528–575 (GEFGWFYGDFFFDDSPKLTYNGIYRFLNNPERVLGLAGVWGAVLITSS). Residues 576 to 596 (GAVTFLALLSHILSLAFIQFV) traverse the membrane as a helical segment. The Cytoplasmic segment spans residues 597–977 (ERPHMQKLYG…TTTPLEESKE (381 aa)).

Belongs to the class VI-like SAM-binding methyltransferase superfamily. CHO2 family.

It is found in the endoplasmic reticulum membrane. The catalysed reaction is a 1,2-diacyl-sn-glycero-3-phosphoethanolamine + S-adenosyl-L-methionine = a 1,2-diacyl-sn-glycero-3-phospho-N-methylethanolamine + S-adenosyl-L-homocysteine + H(+). It functions in the pathway phospholipid metabolism; phosphatidylcholine biosynthesis. Catalyzes the first step of the methylation pathway of phosphatidylcholine biosynthesis, the SAM-dependent methylation of phosphatidylethanolamine (PE) to phosphatidylmonomethylethanolamine (PMME). This chain is Phosphatidylethanolamine N-methyltransferase (cho2), found in Penicillium rubens (strain ATCC 28089 / DSM 1075 / NRRL 1951 / Wisconsin 54-1255) (Penicillium chrysogenum).